The following is a 530-amino-acid chain: Cytochrome P450 78A6 (530 aa).

A helical transmembrane segment spans residues 25–45 (LAFSLLAVTIIWLAISLFLWT). Residue C474 coordinates heme.

The protein belongs to the cytochrome P450 family. It depends on heme as a cofactor. As to expression, expressed in leaves, sepals, petals, stamens, carpels and developing ovules.

Its subcellular location is the membrane. Plays a role in seed and fruit development. Functions probably in association with CYP78A9 in the regulation of seed growth. Acts maternally to promote seed growth. The sequence is that of Cytochrome P450 78A6 (CYP78A6) from Arabidopsis thaliana (Mouse-ear cress).